The primary structure comprises 101 residues: Putative antitoxin HigA2 (101 aa).

Positions 35–90 (LRELRAAQSLTQVQVAALAHIRQSRVSSIENGDIGSAQVNTLRKYVSALGGELDIT) constitute an HTH cro/C1-type domain. A DNA-binding region (H-T-H motif) is located at residues 46–65 (QVQVAALAHIRQSRVSSIEN).

Functionally, putative antitoxin component of a type II toxin-antitoxin (TA) system. Its cognate toxin would be HigB2. The chain is Putative antitoxin HigA2 from Mycobacterium tuberculosis (strain ATCC 25618 / H37Rv).